A 217-amino-acid polypeptide reads, in one-letter code: Non-structural protein NS3 (217 aa).

This sequence belongs to the orbivirus NS3 family.

Functionally, may play a role in the release of virions from infected cells. This is Non-structural protein NS3 (Segment-10) from Camelus dromedarius (Dromedary).